Consider the following 536-residue polypeptide: Phosphoenolpyruvate carboxykinase (ATP) (536 aa).

Substrate is bound by residues arginine 62, tyrosine 203, and lysine 209. Residues lysine 209, histidine 228, and 244-252 (GLSGTGKTT) contribute to the ATP site. Mn(2+) contacts are provided by lysine 209 and histidine 228. Aspartate 265 is a Mn(2+) binding site. Residues glutamate 293, arginine 329, 445-446 (RI), and threonine 451 each bind ATP. A substrate-binding site is contributed by arginine 329.

It belongs to the phosphoenolpyruvate carboxykinase (ATP) family. As to quaternary structure, monomer. It depends on Mn(2+) as a cofactor.

Its subcellular location is the cytoplasm. The enzyme catalyses oxaloacetate + ATP = phosphoenolpyruvate + ADP + CO2. The protein operates within carbohydrate biosynthesis; gluconeogenesis. Functionally, involved in the gluconeogenesis. Catalyzes the conversion of oxaloacetate (OAA) to phosphoenolpyruvate (PEP) through direct phosphoryl transfer between the nucleoside triphosphate and OAA. The protein is Phosphoenolpyruvate carboxykinase (ATP) of Actinobacillus pleuropneumoniae serotype 5b (strain L20).